Consider the following 929-residue polypeptide: Bifunctional uridylyltransferase/uridylyl-removing enzyme (929 aa).

The segment at 1–379 (MSPSRPAADE…RPAAKRRRVP (379 aa)) is uridylyltransferase. The segment at 380–735 (ESDDFVIDNN…VGFDEARAVT (356 aa)) is uridylyl-removing. The HD domain occupies 495-618 (VDEHLIRCVG…VETVEQMKML (124 aa)). 2 ACT domains span residues 736 to 818 (ELTI…AVAR) and 849 to 929 (VIEV…KPAA).

Belongs to the GlnD family. Mg(2+) is required as a cofactor.

It catalyses the reaction [protein-PII]-L-tyrosine + UTP = [protein-PII]-uridylyl-L-tyrosine + diphosphate. It carries out the reaction [protein-PII]-uridylyl-L-tyrosine + H2O = [protein-PII]-L-tyrosine + UMP + H(+). With respect to regulation, uridylyltransferase (UTase) activity is inhibited by glutamine, while glutamine activates uridylyl-removing (UR) activity. Modifies, by uridylylation and deuridylylation, the PII regulatory proteins (GlnB and homologs), in response to the nitrogen status of the cell that GlnD senses through the glutamine level. Under low glutamine levels, catalyzes the conversion of the PII proteins and UTP to PII-UMP and PPi, while under higher glutamine levels, GlnD hydrolyzes PII-UMP to PII and UMP (deuridylylation). Thus, controls uridylylation state and activity of the PII proteins, and plays an important role in the regulation of nitrogen fixation and metabolism. This chain is Bifunctional uridylyltransferase/uridylyl-removing enzyme, found in Rhodopseudomonas palustris (strain ATCC BAA-98 / CGA009).